Here is an 808-residue protein sequence, read N- to C-terminus: ATP-dependent RNA helicase dbp4 (808 aa).

Residues 1 to 20 form a disordered region; sequence MAPPSVGRKSKNISKGKVDA. The Q motif signature appears at 49-77; it reads KNFSELPLSGPTSSGLEASHFKTLTDVQS. Positions 80–254 constitute a Helicase ATP-binding domain; that stretch reads VPLALKGKDI…RLSLKEPEYV (175 aa). 93 to 100 contributes to the ATP binding site; sequence AKTGSGKT. Residues 202–205 carry the DEAD box motif; it reads DEAD. Residues 280-439 form the Helicase C-terminal domain; sequence KLNTLFGFIR…DIKNQLQNMC (160 aa). Disordered stretches follow at residues 491 to 535, 555 to 620, and 654 to 795; these read IKFQ…KYDR, DDTP…GISK, and EEGN…EPET. The span at 519 to 535 shows a compositional bias: basic and acidic residues; it reads TEKKPKKKDEVRTKYDR. Acidic residues-rich tracts occupy residues 564 to 573 and 584 to 605; these read GTADADEDND and DNDD…DDDV. A compositionally biased stretch (basic and acidic residues) spans 670–705; sequence FRAKGTAEEQRAKFLEEEAERVREADLLDKQTAKDK. Residues 720-739 are compositionally biased toward acidic residues; sequence LDDDDEEALELVDAGDDEDP. Positions 767–778 are enriched in basic and acidic residues; that stretch reads KWFEDDSDDERK.

This sequence belongs to the DEAD box helicase family. DDX10/DBP4 subfamily. In terms of assembly, interacts with the U3 and U14 snoRNAs. Associates with pre-ribosomal complexes.

The protein resides in the nucleus. Its subcellular location is the nucleolus. The enzyme catalyses ATP + H2O = ADP + phosphate + H(+). In terms of biological role, ATP-dependent RNA helicase required for ribosome biogenesis. Involved in the release of U14 snoRNA in pre-ribosomal complexes. Required for pre-rRNA cleavage at site A2. The polypeptide is ATP-dependent RNA helicase dbp4 (dbp4) (Sclerotinia sclerotiorum (strain ATCC 18683 / 1980 / Ss-1) (White mold)).